The sequence spans 306 residues: Beta-lactamase 1 (306 aa).

An N-terminal signal peptide occupies residues 1 to 43 (MKNKKMLKIGMCVGILGLSITSLVTFTGGALQVEAKEKTGQVK). Ser-89 acts as the Acyl-ester intermediate in catalysis. Glu-185 acts as the Proton acceptor in catalysis. Substrate is bound at residue 251-253 (KSG).

This sequence belongs to the class-A beta-lactamase family.

It localises to the secreted. The enzyme catalyses a beta-lactam + H2O = a substituted beta-amino acid. Functionally, acts preferentially on penicillins. This chain is Beta-lactamase 1 (penPC), found in Bacillus cereus.